The primary structure comprises 589 residues: Enhancer of polycomb-like protein 1 (589 aa).

Disordered stretches follow at residues 298-339 (GDED…RPAE), 403-430 (MTPPASASSGSMDEPTPMDLDKPKPNPP), 468-497 (LPSPARDLSEEQSDRWKYDQSSDDEDDAPV), and 516-589 (LQTV…QPVS). Positions 474–487 (DLSEEQSDRWKYDQ) are enriched in basic and acidic residues. Positions 557-566 (PQPNQSQSLP) are enriched in low complexity. Residues 567-589 (LPQPQQPVAQPQPQPQPQAQPVS) show a composition bias toward pro residues.

The protein belongs to the enhancer of polycomb family. Component of the NuA4 histone acetyltransferase complex.

Its subcellular location is the nucleus. Functionally, component of the NuA4 histone acetyltransferase complex which is involved in transcriptional activation of selected genes principally by acetylation of nucleosomal histone H4 and H2A. The NuA4 complex is also involved in DNA repair. Involved in gene silencing by neighboring heterochromatin, blockage of the silencing spreading along the chromosome, and required for cell cycle progression through G2/M. This is Enhancer of polycomb-like protein 1 (epl-1) from Neurospora crassa (strain ATCC 24698 / 74-OR23-1A / CBS 708.71 / DSM 1257 / FGSC 987).